Here is a 95-residue protein sequence, read N- to C-terminus: Integration host factor subunit beta (95 aa).

The segment at 56 to 76 (RAPRTGRNPKTGTSVELDGKY) is disordered.

This sequence belongs to the bacterial histone-like protein family. Heterodimer of an alpha and a beta chain.

In terms of biological role, this protein is one of the two subunits of integration host factor, a specific DNA-binding protein that functions in genetic recombination as well as in transcriptional and translational control. This Shewanella denitrificans (strain OS217 / ATCC BAA-1090 / DSM 15013) protein is Integration host factor subunit beta.